The following is a 272-amino-acid chain: Dermonecrotic toxin SpeSicTox-betaIB2a (272 aa).

Histidine 5 is an active-site residue. 2 residues coordinate Mg(2+): glutamate 25 and aspartate 27. Catalysis depends on histidine 41, which acts as the Nucleophile. Cystine bridges form between cysteine 45/cysteine 51 and cysteine 47/cysteine 191. Aspartate 85 is a Mg(2+) binding site.

Belongs to the arthropod phospholipase D family. Class II subfamily. It depends on Mg(2+) as a cofactor. In terms of tissue distribution, expressed by the venom gland.

It is found in the secreted. It carries out the reaction an N-(acyl)-sphingosylphosphocholine = an N-(acyl)-sphingosyl-1,3-cyclic phosphate + choline. It catalyses the reaction an N-(acyl)-sphingosylphosphoethanolamine = an N-(acyl)-sphingosyl-1,3-cyclic phosphate + ethanolamine. The catalysed reaction is a 1-acyl-sn-glycero-3-phosphocholine = a 1-acyl-sn-glycero-2,3-cyclic phosphate + choline. The enzyme catalyses a 1-acyl-sn-glycero-3-phosphoethanolamine = a 1-acyl-sn-glycero-2,3-cyclic phosphate + ethanolamine. Functionally, dermonecrotic toxins cleave the phosphodiester linkage between the phosphate and headgroup of certain phospholipids (sphingolipid and lysolipid substrates), forming an alcohol (often choline) and a cyclic phosphate. This toxin acts on sphingomyelin (SM). It may also act on ceramide phosphoethanolamine (CPE), lysophosphatidylcholine (LPC) and lysophosphatidylethanolamine (LPE), but not on lysophosphatidylserine (LPS), and lysophosphatidylglycerol (LPG). It acts by transphosphatidylation, releasing exclusively cyclic phosphate products as second products. Induces dermonecrosis, hemolysis, increased vascular permeability, edema, inflammatory response, and platelet aggregation. The sequence is that of Dermonecrotic toxin SpeSicTox-betaIB2a from Sicarius peruensis (Six-eyed sand spider).